Consider the following 278-residue polypeptide: Large ribosomal subunit protein uL2 (278 aa).

2 disordered regions span residues 1 to 58 and 224 to 278; these read MAIR…GGGH and VVMN…GKKR. The segment covering 23 to 33 has biased composition (basic and acidic residues); it reads EITRDHPEKSL. The segment covering 37 to 58 has biased composition (basic residues); that stretch reads LHGRGGRNAHGRITTRHKGGGH. Basic and acidic residues predominate over residues 253 to 268; that stretch reads PEGRTRKPKKASDKLI. The span at 269 to 278 shows a compositional bias: basic residues; the sequence is VRRRRTGKKR.

The protein belongs to the universal ribosomal protein uL2 family. In terms of assembly, part of the 50S ribosomal subunit. Forms a bridge to the 30S subunit in the 70S ribosome.

Its function is as follows. One of the primary rRNA binding proteins. Required for association of the 30S and 50S subunits to form the 70S ribosome, for tRNA binding and peptide bond formation. It has been suggested to have peptidyltransferase activity; this is somewhat controversial. Makes several contacts with the 16S rRNA in the 70S ribosome. This is Large ribosomal subunit protein uL2 from Mycolicibacterium vanbaalenii (strain DSM 7251 / JCM 13017 / BCRC 16820 / KCTC 9966 / NRRL B-24157 / PYR-1) (Mycobacterium vanbaalenii).